The following is a 249-amino-acid chain: uncharacterized protein (249 aa).

Residues 51 to 67 (IPKDSLTNGKSSKNCMS) show a composition bias toward polar residues. 2 disordered regions span residues 51–131 (IPKD…DSPV) and 205–240 (YLNASLSEDDTDSIVGTDYSEEEKESISETESSSDG). The span at 93-106 (SFQSMNSSMSSSTQ) shows a compositional bias: low complexity. Residues 110 to 129 (RILDEKNKDQSSSNENDRDS) are compositionally biased toward basic and acidic residues.

This sequence belongs to the asfivirus DP238L family.

This is an uncharacterized protein from African swine fever virus (isolate Tick/Malawi/Lil 20-1/1983) (ASFV).